We begin with the raw amino-acid sequence, 766 residues long: 5-methyltetrahydropteroyltriglutamate--homocysteine methyltransferase (766 aa).

Residues 16 to 19 (RELK) and Lys119 contribute to the 5-methyltetrahydropteroyltri-L-glutamate site. L-homocysteine is bound by residues 440–442 (IGS) and Glu493. Residues 440-442 (IGS) and Glu493 each bind L-methionine. Residues 524 to 525 (RC) and Trp570 contribute to the 5-methyltetrahydropteroyltri-L-glutamate site. Asp608 is a binding site for L-homocysteine. An L-methionine-binding site is contributed by Asp608. Glu614 serves as a coordination point for 5-methyltetrahydropteroyltri-L-glutamate. 3 residues coordinate Zn(2+): His650, Cys652, and Glu674. His703 functions as the Proton donor in the catalytic mechanism. Cys735 is a Zn(2+) binding site.

It belongs to the vitamin-B12 independent methionine synthase family. It depends on Zn(2+) as a cofactor.

It carries out the reaction 5-methyltetrahydropteroyltri-L-glutamate + L-homocysteine = tetrahydropteroyltri-L-glutamate + L-methionine. Its pathway is amino-acid biosynthesis; L-methionine biosynthesis via de novo pathway; L-methionine from L-homocysteine (MetE route): step 1/1. Functionally, catalyzes the transfer of a methyl group from 5-methyltetrahydrofolate to homocysteine resulting in methionine formation. This Pseudomonas aeruginosa (strain LESB58) protein is 5-methyltetrahydropteroyltriglutamate--homocysteine methyltransferase.